The following is a 402-amino-acid chain: Aminotransferase-like protein FGM3 (402 aa).

Pyridoxal 5'-phosphate-binding positions include threonine 137 to isoleucine 138, aspartate 218, and phenylalanine 282 to glycine 283.

This sequence belongs to the class-V pyridoxal-phosphate-dependent aminotransferase family. Csd subfamily.

Aminotransferase-like protein; part of the Fg3_54/C64 gene cluster that mediates the biosynthesis of the octapeptide fusaoctaxin A, a virulence factor that is required for cell-to-cell invasiveness of plant host. The 2 nonribosomal peptide synthetases NRPS9 and NRPS5 form an assembly line which likely utilizes GABA as a starter unit (loaded on the unique module M1 of NRPS9) and sequentially incorporates seven extender units composed of the residues L-Ala, L-allo-Ile, L-Ser, L-Val, L-Ser, L-Leu and L-Leu, respectively. During the process, each of the residues that are tethered on modules M3-M7 of NRPS5 containing an E domain can undergo an epimerization reaction to produce a D-configuration before the transpeptidation reaction occurs. The elongation of the peptidyl chain might be terminated by module M8-mediated L-Leu incorporation, followed by R domain-catalyzed 4 electron reduction to release the resulting octapeptide from the assembly line as an alcohol. Fusaoctaxin A is cleaved by the cluster specific ABC transporter FGM5 to the pentapeptide fusapentaxin A and the tripeptide fusatrixin A. The other enzymes from the cluster, FGM1, FGM2, FGM3 and FGM9 seem not to be involved in the biosynthesis of fusaoctaxin A and their functions have still to be determined. This chain is Aminotransferase-like protein FGM3, found in Gibberella zeae (strain ATCC MYA-4620 / CBS 123657 / FGSC 9075 / NRRL 31084 / PH-1) (Wheat head blight fungus).